The sequence spans 931 residues: Isoleucine--tRNA ligase (931 aa).

The short motif at 58 to 68 is the 'HIGH' region element; that stretch reads PYANGHLHCGH. Glutamate 559 is a binding site for L-isoleucyl-5'-AMP. The 'KMSKS' region signature appears at 600 to 604; the sequence is KLSKS. Residue lysine 603 coordinates ATP. Residues cysteine 894, cysteine 897, cysteine 914, and cysteine 917 each coordinate Zn(2+).

This sequence belongs to the class-I aminoacyl-tRNA synthetase family. IleS type 1 subfamily. In terms of assembly, monomer. Zn(2+) serves as cofactor.

The protein resides in the cytoplasm. The enzyme catalyses tRNA(Ile) + L-isoleucine + ATP = L-isoleucyl-tRNA(Ile) + AMP + diphosphate. Functionally, catalyzes the attachment of isoleucine to tRNA(Ile). As IleRS can inadvertently accommodate and process structurally similar amino acids such as valine, to avoid such errors it has two additional distinct tRNA(Ile)-dependent editing activities. One activity is designated as 'pretransfer' editing and involves the hydrolysis of activated Val-AMP. The other activity is designated 'posttransfer' editing and involves deacylation of mischarged Val-tRNA(Ile). This Legionella pneumophila (strain Corby) protein is Isoleucine--tRNA ligase.